The following is a 402-amino-acid chain: Tol-Pal system protein TolB (402 aa).

Residues 1–17 (MKKIVAIFLVFLGSLWA) form the signal peptide.

It belongs to the TolB family. The Tol-Pal system is composed of five core proteins: the inner membrane proteins TolA, TolQ and TolR, the periplasmic protein TolB and the outer membrane protein Pal. They form a network linking the inner and outer membranes and the peptidoglycan layer.

It is found in the periplasm. Part of the Tol-Pal system, which plays a role in outer membrane invagination during cell division and is important for maintaining outer membrane integrity. The sequence is that of Tol-Pal system protein TolB from Campylobacter jejuni (strain RM1221).